We begin with the raw amino-acid sequence, 179 residues long: ATP-dependent protease subunit HslV (179 aa).

The active site involves T7. Na(+) contacts are provided by G162, C165, and T168.

Belongs to the peptidase T1B family. HslV subfamily. A double ring-shaped homohexamer of HslV is capped on each side by a ring-shaped HslU homohexamer. The assembly of the HslU/HslV complex is dependent on binding of ATP.

It localises to the cytoplasm. It catalyses the reaction ATP-dependent cleavage of peptide bonds with broad specificity.. Its activity is regulated as follows. Allosterically activated by HslU binding. Protease subunit of a proteasome-like degradation complex believed to be a general protein degrading machinery. The protein is ATP-dependent protease subunit HslV of Bordetella pertussis (strain Tohama I / ATCC BAA-589 / NCTC 13251).